The following is an 86-amino-acid chain: Serine protease inhibitor Kazal-type 4 (86 aa).

Residues 1-26 (MAMHLWLVTLTLVPLLGMDRELMVSA) form the signal peptide. One can recognise a Kazal-like domain in the interval 31 to 86 (FPRMPFCEHMAELPNCPQTPNLICGTDGLTYENECHLCLTRMKTMKDIQIMKDGQC). Intrachain disulfides connect Cys-37–Cys-68, Cys-46–Cys-65, and Cys-54–Cys-86.

In terms of tissue distribution, expressed in the intestinal tract.

The protein resides in the secreted. The sequence is that of Serine protease inhibitor Kazal-type 4 (Spink4) from Mus musculus (Mouse).